A 186-amino-acid polypeptide reads, in one-letter code: Cytochrome c oxidase subunit 4, mitochondrial (186 aa).

A mitochondrion-targeting transit peptide spans 1–31; the sequence is MLLSRTAVAVARRATAAPALRRSIATTVVRC. Residues C118, H126, C142, and C145 each coordinate Zn(2+).

Belongs to the cytochrome c oxidase subunit 5B family. As to quaternary structure, component of the cytochrome c oxidase (complex IV, CIV), a multisubunit enzyme composed of 11 subunits. The complex is composed of a catalytic core of 3 subunits Cox1, Cox2 and Cox3, encoded in the mitochondrial DNA, and 8 supernumerary subunits Cox4, Cox5a/Cox5, Cox6, Cox7, Cox8, Cox7a/Cox9, Cox6b/Cox12 and Cox6a/Cox13, which are encoded in the nuclear genome. The complex exists as a monomer or a dimer and forms respiratory supercomplexes (SCs) in the inner mitochondrial membrane with NADH-ubiquinone oxidoreductase (complex I, CI) and ubiquinol-cytochrome c oxidoreductase (cytochrome b-c1 complex, complex III, CIII), resulting in various different assemblies (supercomplexes I(1)IV(1), I(1)III(3)IV(2), III(2)IV(1) and III(2)IV(2) as well as larger supercomplexes of compositions like I(1)III(2)IV(5-6)).

It is found in the mitochondrion inner membrane. Its pathway is energy metabolism; oxidative phosphorylation. Functionally, component of the cytochrome c oxidase, the last enzyme in the mitochondrial electron transport chain which drives oxidative phosphorylation. The respiratory chain contains 3 multisubunit complexes succinate dehydrogenase (complex II, CII), ubiquinol-cytochrome c oxidoreductase (cytochrome b-c1 complex, complex III, CIII) and cytochrome c oxidase (complex IV, CIV), that cooperate to transfer electrons derived from NADH and succinate to molecular oxygen, creating an electrochemical gradient over the inner membrane that drives transmembrane transport and the ATP synthase. Cytochrome c oxidase is the component of the respiratory chain that catalyzes the reduction of oxygen to water. Electrons originating from reduced cytochrome c in the intermembrane space (IMS) are transferred via the dinuclear copper A center (CU(A)) of Cox2 and heme A of Cox1 to the active site in Cox1, a binuclear center (BNC) formed by heme A3 and copper B (CU(B)). The BNC reduces molecular oxygen to 2 water molecules using 4 electrons from cytochrome c in the IMS and 4 protons from the mitochondrial matrix. The chain is Cytochrome c oxidase subunit 4, mitochondrial (cox-4) from Neurospora crassa (strain ATCC 24698 / 74-OR23-1A / CBS 708.71 / DSM 1257 / FGSC 987).